The primary structure comprises 145 residues: Ribonuclease H (145 aa).

Residues Ser2 to Ile143 form the RNase H type-1 domain. The Mg(2+) site is built by Asp11, Glu49, Asp71, and Asp135.

It belongs to the RNase H family. As to quaternary structure, monomer. It depends on Mg(2+) as a cofactor.

It localises to the cytoplasm. The catalysed reaction is Endonucleolytic cleavage to 5'-phosphomonoester.. Endonuclease that specifically degrades the RNA of RNA-DNA hybrids. The polypeptide is Ribonuclease H (Wolbachia sp. subsp. Drosophila simulans (strain wRi)).